Here is an 85-residue protein sequence, read N- to C-terminus: Small ribosomal subunit protein bS18c (85 aa).

It belongs to the bacterial ribosomal protein bS18 family. In terms of assembly, part of the 30S ribosomal subunit.

Its subcellular location is the plastid. It is found in the chloroplast. This is Small ribosomal subunit protein bS18c from Tupiella akineta (Green alga).